The primary structure comprises 282 residues: Transcription repressor OFP18 (282 aa).

The disordered stretch occupies residues 1–85 (MVRKMKLPFL…YSSFSSTSHA (85 aa)). Residues 15 to 35 (SSSSFSSNSSSSSSSWPWPSS) show a composition bias toward low complexity. Positions 36 to 47 (HQQNLKTISSKA) are enriched in polar residues. The segment covering 66-85 (SFSSSPSSSSYSSFSSTSHA) has biased composition (low complexity). The OVATE domain maps to 139 to 199 (LSLESNDPYT…FAAFVDLVLN (61 aa)).

As to expression, expressed in roots and shoots.

The protein localises to the nucleus. Functionally, transcriptional repressor that regulates multiple aspects of plant growth and development through the regulation of BEL1-LIKE (BLH) and KNOX TALE (KNAT) homeodomain transcription factors. This Arabidopsis thaliana (Mouse-ear cress) protein is Transcription repressor OFP18 (OFP18).